We begin with the raw amino-acid sequence, 641 residues long: Pre-mRNA-processing factor 39 (641 aa).

A disordered region spans residues 1–50 (MEKSPEHCAEGSPSPATESAPSATEPPLPSTEPPLPSTEPPLPSTEPPLP). Over residues 10 to 23 (EGSPSPATESAPSA) the composition is skewed to low complexity. The span at 24–50 (TEPPLPSTEPPLPSTEPPLPSTEPPLP) shows a compositional bias: pro residues. HAT repeat units lie at residues 50–82 (PPLPPDFEKYWKSVQAYPEDFNTWTYLLQYVEQ), 84–116 (NHLFAARKAFDAFLAHYPYCYGYWKKYADLEKK), 118–150 (NNILEADEVYRRGIQAITLSVDLWMHYLNFLKE), 158–193 (ETSLTLRGTFEHAVVSAGLDFRSDKLWEMYINWETE), 304–336 (NFEEEIKRPYFHVKPLEKAQLNNWKEYLEFELE), 338–370 (GSNERIVILFERCVIACACYEEFWIKYAKYMEN), and 372–407 (SVEGVRHVYNRACHVHLAKKPMVHLLWAAFEEQQGN).

The protein belongs to the PRP39 family.

The protein resides in the nucleus. Involved in pre-mRNA splicing. The polypeptide is Pre-mRNA-processing factor 39 (prpf39) (Xenopus laevis (African clawed frog)).